The sequence spans 571 residues: Protein dead ringer homolog (571 aa).

2 disordered regions span residues 45-117 and 190-229; these read QHQQ…EPDK and KRMQ…SCNG. A compositionally biased stretch (basic and acidic residues) spans 49 to 77; that stretch reads RMMEQHKNDDVISNDVRCDDFSDGGERQR. Over residues 195-206 the composition is skewed to polar residues; sequence DHNIQQSTNHIP. The segment covering 207 to 224 has biased composition (low complexity); the sequence is TPSSASSHTSSGSVTSQT. Residues 249 to 341 form the ARID domain; it reads DIKRKEFLDD…YLYPFECERE (93 aa). Residues 459–471 show a composition bias toward low complexity; it reads AAHHAAQQAAQHQ. Residues 459 to 528 form a disordered region; sequence AAHHAAQQAA…GDRGRHNEMS (70 aa). The REKLES domain occupies 473 to 558; that stretch reads SLKKEIDSDY…GVLFAHSPNH (86 aa). Basic and acidic residues-rich tracts occupy residues 487-507 and 518-527; these read PPEK…DNQR and MGDRGRHNEM.

The protein localises to the nucleus. In terms of biological role, transcription factor. The sequence is that of Protein dead ringer homolog (Ci-DRIL1/2) from Ciona intestinalis (Transparent sea squirt).